Reading from the N-terminus, the 440-residue chain is Glutamate-1-semialdehyde 2,1-aminomutase (440 aa).

The residue at position 271 (K271) is an N6-(pyridoxal phosphate)lysine.

It belongs to the class-III pyridoxal-phosphate-dependent aminotransferase family. HemL subfamily. In terms of assembly, homodimer. Requires pyridoxal 5'-phosphate as cofactor.

Its subcellular location is the cytoplasm. The enzyme catalyses (S)-4-amino-5-oxopentanoate = 5-aminolevulinate. It participates in porphyrin-containing compound metabolism; protoporphyrin-IX biosynthesis; 5-aminolevulinate from L-glutamyl-tRNA(Glu): step 2/2. The protein is Glutamate-1-semialdehyde 2,1-aminomutase of Chlamydia pneumoniae (Chlamydophila pneumoniae).